We begin with the raw amino-acid sequence, 75 residues long: Putative defensin-like protein 271 (75 aa).

The first 23 residues, 1 to 23 (MTSMKLHIVALCIIVSFLVNVQS), serve as a signal peptide directing secretion. Cystine bridges form between Cys33–Cys72, Cys39–Cys61, Cys45–Cys70, and Cys49–Cys71.

It belongs to the DEFL family.

The protein localises to the secreted. This chain is Putative defensin-like protein 271, found in Arabidopsis thaliana (Mouse-ear cress).